A 270-amino-acid polypeptide reads, in one-letter code: UPF0354 protein BPUM_2629 (270 aa).

This sequence belongs to the UPF0354 family.

In Bacillus pumilus (strain SAFR-032), this protein is UPF0354 protein BPUM_2629.